Reading from the N-terminus, the 113-residue chain is Large ribosomal subunit protein uL22 (113 aa).

This sequence belongs to the universal ribosomal protein uL22 family. In terms of assembly, part of the 50S ribosomal subunit.

In terms of biological role, this protein binds specifically to 23S rRNA; its binding is stimulated by other ribosomal proteins, e.g. L4, L17, and L20. It is important during the early stages of 50S assembly. It makes multiple contacts with different domains of the 23S rRNA in the assembled 50S subunit and ribosome. Functionally, the globular domain of the protein is located near the polypeptide exit tunnel on the outside of the subunit, while an extended beta-hairpin is found that lines the wall of the exit tunnel in the center of the 70S ribosome. The chain is Large ribosomal subunit protein uL22 from Trichlorobacter lovleyi (strain ATCC BAA-1151 / DSM 17278 / SZ) (Geobacter lovleyi).